The chain runs to 312 residues: Tetraacyldisaccharide 4'-kinase (312 aa).

Residue 60–67 coordinates ATP; the sequence is IAGGSGKT.

It belongs to the LpxK family.

It carries out the reaction a lipid A disaccharide + ATP = a lipid IVA + ADP + H(+). It participates in glycolipid biosynthesis; lipid IV(A) biosynthesis; lipid IV(A) from (3R)-3-hydroxytetradecanoyl-[acyl-carrier-protein] and UDP-N-acetyl-alpha-D-glucosamine: step 6/6. In terms of biological role, transfers the gamma-phosphate of ATP to the 4'-position of a tetraacyldisaccharide 1-phosphate intermediate (termed DS-1-P) to form tetraacyldisaccharide 1,4'-bis-phosphate (lipid IVA). This is Tetraacyldisaccharide 4'-kinase from Helicobacter pylori (strain HPAG1).